Reading from the N-terminus, the 123-residue chain is WAP four-disulfide core domain protein 5 (123 aa).

The first 24 residues, 1-24, serve as a signal peptide directing secretion; sequence MRIQSLLLLGALLAVGSQPPAAFG. 2 consecutive WAP domains span residues 27–73 and 74–121; these read KGEK…CVPR and VSVK…RDPA. 8 disulfides stabilise this stretch: Cys-34–Cys-62, Cys-41–Cys-66, Cys-49–Cys-61, Cys-55–Cys-70, Cys-81–Cys-109, Cys-88–Cys-113, Cys-96–Cys-108, and Cys-102–Cys-117.

It is found in the secreted. Its function is as follows. Putative acid-stable proteinase inhibitor. The chain is WAP four-disulfide core domain protein 5 (WFDC5) from Saimiri boliviensis boliviensis (Bolivian squirrel monkey).